A 483-amino-acid polypeptide reads, in one-letter code: 2-methylcitrate dehydratase (483 aa).

Belongs to the PrpD family. Monomer.

It catalyses the reaction (2S,3S)-2-methylcitrate = 2-methyl-cis-aconitate + H2O. The enzyme catalyses citrate = D-threo-isocitrate. It participates in organic acid metabolism; propanoate degradation. The protein operates within carbohydrate metabolism; tricarboxylic acid cycle; isocitrate from oxaloacetate: step 2/2. In terms of biological role, involved in the catabolism of short chain fatty acids (SCFA) via the tricarboxylic acid (TCA)(acetyl degradation route) and via the 2-methylcitrate cycle I (propionate degradation route). Catalyzes the dehydration of 2-methylcitrate (2-MC) to yield the cis isomer of 2-methyl-aconitate. It is also able to catalyze the dehydration of citrate and the hydration of cis-aconitate at a lower rate. Due to its broad substrate specificity, it seems to be responsible for the residual aconitase activity of the acnAB-null mutant. The sequence is that of 2-methylcitrate dehydratase from Escherichia coli (strain K12).